The sequence spans 1144 residues: Ribonucleoside-diphosphate reductase large subunit (1144 aa).

The disordered stretch occupies residues 1–33 (MANRPAASALAGARSPSERQEPREPEVAPPGGD). The span at 16 to 26 (PSERQEPREPE) shows a compositional bias: basic and acidic residues. The RIP homotypic interaction motif (RHIM) motif lies at 55-75 (AYRISDSSFVQCGSNCSMIID). Residues 118-324 (SGPSATTSVG…TDPGYPVPLE (207 aa)) are disordered. The span at 119-132 (GPSATTSVGTQTSG) shows a compositional bias: polar residues. The span at 141–159 (TPEPQGPQAVPPPPPPPFP) shows a compositional bias: pro residues. Positions 164-179 (CCARRDARGGAEKDVG) are enriched in basic and acidic residues. Residues 192–204 (SETEDSDSSDEDT) show a composition bias toward acidic residues. Low complexity-rich tracts occupy residues 205-216 (GSGSETLSRSSS) and 279-305 (GSAT…DVAP). Substrate contacts are provided by residues Thr573, 588-589 (SC), Gly619, 798-802 (NLCTE), and 975-979 (PTAAS). Residues Cys589 and Cys815 are joined by a disulfide bond. The Proton acceptor role is filled by Asn798. The active-site Cysteine radical intermediate is Cys800. The Proton acceptor role is filled by Glu802.

Belongs to the ribonucleoside diphosphate reductase large chain family. As to quaternary structure, heterotetramer composed of a homodimer of the large subunit (R1) and a homodimer of the small subunit (R2). Larger multisubunit protein complex are also active, composed of (R1)n(R2)n. May self-assemble (via RIP homotypic interaction motif/RHIM) into homomeric fibrillar amyloid structures. Interacts (via RHIM) with human RIPK1 (via RHIM). Interacts (via RHIM) with human RIPK3 (via RHIM). May interact (via RHIM) with human ZBP1 (via RHIM). Interacts (via C-terminus) with host CASP8.

The enzyme catalyses a 2'-deoxyribonucleoside 5'-diphosphate + [thioredoxin]-disulfide + H2O = a ribonucleoside 5'-diphosphate + [thioredoxin]-dithiol. Its function is as follows. Ribonucleoside-diphosphate reductase holoenzyme that provides the precursors necessary for viral DNA synthesis. Allows virus growth in non-dividing cells, as well as reactivation from latency in infected hosts. Catalyzes the biosynthesis of deoxyribonucleotides from the corresponding ribonucleotides. The N-terminal region confers antiapoptotic activity in differentiated cells such as neurons and is important for viral reactivation to increase neural survivability. Prevents host necroptosis by targeting host RIPK1 and RIPK3, thereby hampering the formation of necroptotic RIPK1-RIPK3 complexes. May form hetero-amyloid structures with host proteins RIPK3 or ZBP1, thereby preventing RIPK3- and ZBP1-mediated necroptosis. In addition, inhibits extrinsic apoptosis by targeting host CASP8. The protein is Ribonucleoside-diphosphate reductase large subunit of Homo sapiens (Human).